The following is a 594-amino-acid chain: Glutamate decarboxylase 1 (594 aa).

A compositionally biased stretch (low complexity) spans 1–13; it reads MASSTPSSSATSS. Positions 1-23 are disordered; the sequence is MASSTPSSSATSSNAGADPNTTN. Serine 78 is subject to Phosphoserine. 190–192 is a 4-aminobutanoate binding site; the sequence is QLS. N6-(pyridoxal phosphate)lysine is present on lysine 405. Position 567 (arginine 567) interacts with 4-aminobutanoate.

This sequence belongs to the group II decarboxylase family. As to quaternary structure, homodimer. It depends on pyridoxal 5'-phosphate as a cofactor.

The catalysed reaction is L-glutamate + H(+) = 4-aminobutanoate + CO2. Its function is as follows. Catalyzes the synthesis of the inhibitory neurotransmitter gamma-aminobutyric acid (GABA) with pyridoxal 5'-phosphate as cofactor. In Pongo abelii (Sumatran orangutan), this protein is Glutamate decarboxylase 1 (GAD1).